Consider the following 215-residue polypeptide: Pyridoxine/pyridoxamine 5'-phosphate oxidase (215 aa).

Residues 9–12 and K69 contribute to the substrate site; that span reads RRDY. Residues 64-69, 79-80, K86, and Q108 each bind FMN; these read RILLLK and FT. Substrate is bound by residues Y126, R130, and S134. Residues 143-144 and W188 each bind FMN; that span reads QS. Residue 194 to 196 participates in substrate binding; the sequence is RLH. R198 is an FMN binding site.

This sequence belongs to the pyridoxamine 5'-phosphate oxidase family. Homodimer. FMN is required as a cofactor.

The enzyme catalyses pyridoxamine 5'-phosphate + O2 + H2O = pyridoxal 5'-phosphate + H2O2 + NH4(+). It carries out the reaction pyridoxine 5'-phosphate + O2 = pyridoxal 5'-phosphate + H2O2. Its pathway is cofactor metabolism; pyridoxal 5'-phosphate salvage; pyridoxal 5'-phosphate from pyridoxamine 5'-phosphate: step 1/1. It participates in cofactor metabolism; pyridoxal 5'-phosphate salvage; pyridoxal 5'-phosphate from pyridoxine 5'-phosphate: step 1/1. Its function is as follows. Catalyzes the oxidation of either pyridoxine 5'-phosphate (PNP) or pyridoxamine 5'-phosphate (PMP) into pyridoxal 5'-phosphate (PLP). This is Pyridoxine/pyridoxamine 5'-phosphate oxidase from Pseudomonas fluorescens (strain SBW25).